The following is a 337-amino-acid chain: 1-aminocyclopropane-1-carboxylate deaminase (337 aa).

Lysine 50 bears the N6-(pyridoxal phosphate)lysine mark. The active-site Nucleophile is serine 77.

The protein belongs to the ACC deaminase/D-cysteine desulfhydrase family. As to quaternary structure, homotrimer. The cofactor is pyridoxal 5'-phosphate.

The catalysed reaction is 1-aminocyclopropane-1-carboxylate + H2O = 2-oxobutanoate + NH4(+). In terms of biological role, catalyzes a cyclopropane ring-opening reaction, the irreversible conversion of 1-aminocyclopropane-1-carboxylate (ACC) to ammonia and alpha-ketobutyrate. Allows growth on ACC as a nitrogen source. This is 1-aminocyclopropane-1-carboxylate deaminase from Allorhizobium ampelinum (strain ATCC BAA-846 / DSM 112012 / S4) (Agrobacterium vitis (strain S4)).